Reading from the N-terminus, the 210-residue chain is Ribosomal RNA small subunit methyltransferase G (210 aa).

S-adenosyl-L-methionine contacts are provided by residues G76, L81, V127–E128, and R142.

Belongs to the methyltransferase superfamily. RNA methyltransferase RsmG family.

The protein resides in the cytoplasm. The enzyme catalyses guanosine(527) in 16S rRNA + S-adenosyl-L-methionine = N(7)-methylguanosine(527) in 16S rRNA + S-adenosyl-L-homocysteine. In terms of biological role, specifically methylates the N7 position of guanine in position 527 of 16S rRNA. The protein is Ribosomal RNA small subunit methyltransferase G of Vibrio atlanticus (strain LGP32) (Vibrio splendidus (strain Mel32)).